The sequence spans 458 residues: GTPase Der (458 aa).

EngA-type G domains lie at 4-169 (PSIA…PKDL) and 178-353 (IMMS…TQHR). Residues 10–17 (GRPNVGKS), 57–61 (DTGGL), 120–123 (NKCE), 184–191 (GRPNVGKS), 231–235 (DTAGI), and 296–299 (NKWD) each bind GTP. Positions 354–439 (RRVTTSVVNE…PIILLWRGKQ (86 aa)) constitute a KH-like domain.

This sequence belongs to the TRAFAC class TrmE-Era-EngA-EngB-Septin-like GTPase superfamily. EngA (Der) GTPase family. As to quaternary structure, associates with the 50S ribosomal subunit.

Functionally, GTPase that plays an essential role in the late steps of ribosome biogenesis. The chain is GTPase Der from Prochlorococcus marinus subsp. pastoris (strain CCMP1986 / NIES-2087 / MED4).